The chain runs to 228 residues: Ion-translocating oxidoreductase complex subunit E (228 aa).

5 helical membrane passes run 24–44 (LLGL…LGLG), 73–93 (VFVL…NAFF), 95–115 (ELYL…AIIG), 130–150 (LADG…LGAL), and 184–204 (GFLL…LIAL).

It belongs to the NqrDE/RnfAE family. In terms of assembly, the complex is composed of six subunits: RnfA, RnfB, RnfC, RnfD, RnfE and RnfG.

It is found in the cell inner membrane. In terms of biological role, part of a membrane-bound complex that couples electron transfer with translocation of ions across the membrane. The protein is Ion-translocating oxidoreductase complex subunit E of Thioalkalivibrio sulfidiphilus (strain HL-EbGR7).